A 566-amino-acid chain; its full sequence is Glutamate--tRNA ligase (566 aa).

The short motif at 104–114 (PNPDGPLHLGN) is the 'HIGH' region element.

It belongs to the class-I aminoacyl-tRNA synthetase family. Glutamate--tRNA ligase type 2 subfamily.

Its subcellular location is the cytoplasm. It carries out the reaction tRNA(Glu) + L-glutamate + ATP = L-glutamyl-tRNA(Glu) + AMP + diphosphate. Its function is as follows. Catalyzes the attachment of glutamate to tRNA(Glu) in a two-step reaction: glutamate is first activated by ATP to form Glu-AMP and then transferred to the acceptor end of tRNA(Glu). The sequence is that of Glutamate--tRNA ligase from Metallosphaera sedula (strain ATCC 51363 / DSM 5348 / JCM 9185 / NBRC 15509 / TH2).